The sequence spans 521 residues: MYGTNLLETMGKPTAGHLGMAVTFTILVAFTIHVLRMRFFHPLRRYPGPWLNSITQIPAAWALLRARQPKAYRELHEKYGPIVRVAPNELSFINVEAWDDIYGFLKSTPNFEKSPVFIGAVSPLNGQTGISLANNEEHTRQRRALAAPFTNRALLQQQDILRVHVDKLITALRAKARNKESVNMGEWYTYTTFDIIGDICFAEPFGCLDGGESNEWARAIINIFKAATWDQAIRRVAGTGTLLHKALVKIIIPAEAAQWRTIHFSNSKAKTLARLADPDRQHPDLIKHILDSEDSRAALSPTEIILNMVLFISAGSETTANTMTGWTYFMLRHPEARARATAEVRAAFASPRDIKWETVRALPYLNATLEEALRLFSPAPSNQPRVVPACGAVVAGCPLPSGTTVSVAPWAAVFSARNFADPERFAPERWLDEGGADPRYAADRRGASQPFSTGPRGCMGKNLAYFELRLVLAHLLWHFDLEPTDSAAGRECMRRWEQTDMDTYQTWMKPDLWVDLKEAQR.

The chain crosses the membrane as a helical span at residues 15-35 (AGHLGMAVTFTILVAFTIHVL). N366 carries N-linked (GlcNAc...) asparagine glycosylation. C458 contacts heme.

This sequence belongs to the cytochrome P450 family. The cofactor is heme.

It localises to the membrane. Its pathway is hormone biosynthesis. Functionally, cytochrome P450 monooxygenase involved in the biosynthesis of abscisic acid (ABA), a phytohormone that acts antagonistically toward salicylic acid (SA), jasmonic acid (JA) and ethylene (ETH) signaling, to impede plant defense responses. During pathogen-host interaction, ABA plays a dual role in disease severity by increasing plant susceptibility and accelerating pathogenesis in the fungus itself. The first step of the pathway catalyzes the reaction from farnesyl diphosphate to alpha-ionylideneethane performed by the alpha-ionylideneethane synthase ABA3 via a three-step reaction mechanism involving 2 neutral intermediates, beta-farnesene and allofarnesene. The cytochrome P450 monooxygenase ABA1 might then be involved in the conversion of alpha-ionylideneethane to alpha-ionylideneacetic acid. Alpha-ionylideneacetic acid is further converted to abscisic acid in 2 steps involving the cytochrome P450 monooxygenase ABA2 and the short-chain dehydrogenase/reductase ABA4, via the intermediates 1'-deoxy-ABA or 1',4'-trans-diol-ABA, depending on the order of action of these 2 enzymes. ABA2 is responsible for the hydroxylation of carbon atom C-1' and ABA4 might be involved in the oxidation of the C-4' carbon atom. This is Cytochrome P450 monooxygenase ABA2 from Pyricularia oryzae (strain 70-15 / ATCC MYA-4617 / FGSC 8958) (Rice blast fungus).